Reading from the N-terminus, the 156-residue chain is Ribosomal RNA large subunit methyltransferase H (156 aa).

S-adenosyl-L-methionine is bound by residues leucine 73, glycine 104, and leucine 123–leucine 128.

It belongs to the RNA methyltransferase RlmH family. Homodimer.

Its subcellular location is the cytoplasm. It carries out the reaction pseudouridine(1915) in 23S rRNA + S-adenosyl-L-methionine = N(3)-methylpseudouridine(1915) in 23S rRNA + S-adenosyl-L-homocysteine + H(+). Its function is as follows. Specifically methylates the pseudouridine at position 1915 (m3Psi1915) in 23S rRNA. The chain is Ribosomal RNA large subunit methyltransferase H from Psychromonas ingrahamii (strain DSM 17664 / CCUG 51855 / 37).